The following is a 315-amino-acid chain: Acetaldehyde dehydrogenase 2 (315 aa).

NAD(+) is bound at residue 11 to 14 (SGNI). Cysteine 129 serves as the catalytic Acyl-thioester intermediate. Residues 160 to 168 (SAGPGTRSN) and asparagine 290 contribute to the NAD(+) site.

This sequence belongs to the acetaldehyde dehydrogenase family.

It catalyses the reaction acetaldehyde + NAD(+) + CoA = acetyl-CoA + NADH + H(+). This chain is Acetaldehyde dehydrogenase 2, found in Mycobacterium sp. (strain KMS).